Consider the following 342-residue polypeptide: MTTFLAKNWSSLIKPTKVQYEAVDNNPNIKTMVVEPLERGLGLTLGNSLRRVLLSSLRGAAITSIKIPGVEHELSPVSGVKEDLTDIILNIRDVIVKMDSVQKCNLRLEVTGPAVVTAGMITVTDKQDVTILNPQHVICNLSKGFNLEMDLICEQGKGYVPTSCLHNSDSPIGAIHLDALFNPVRRVSYKVENSMVGQMTNYDKLIITVETNGVVNPDAALGLAARILLDQLQVFINFQEVEEEKPEKLELQTINPVLLKKVYELELSVRSQNCLKNENIVYVGDLVARTETQMLKTANFGRKSLNELKKVLANFNLEFGMKDIGWPPENLESLAKKHEDQY.

The alpha N-terminal domain (alpha-NTD) stretch occupies residues 1 to 239; it reads MTTFLAKNWS…DQLQVFINFQ (239 aa). The segment at 254-342 is alpha C-terminal domain (alpha-CTD); that stretch reads INPVLLKKVY…SLAKKHEDQY (89 aa).

Belongs to the RNA polymerase alpha chain family. As to quaternary structure, homodimer. The RNAP catalytic core consists of 2 alpha, 1 beta, 1 beta' and 1 omega subunit. When a sigma factor is associated with the core the holoenzyme is formed, which can initiate transcription.

It catalyses the reaction RNA(n) + a ribonucleoside 5'-triphosphate = RNA(n+1) + diphosphate. DNA-dependent RNA polymerase catalyzes the transcription of DNA into RNA using the four ribonucleoside triphosphates as substrates. The polypeptide is DNA-directed RNA polymerase subunit alpha (Orientia tsutsugamushi (strain Ikeda) (Rickettsia tsutsugamushi)).